The primary structure comprises 443 residues: Phosphoglucosamine mutase (443 aa).

Ser102 (phosphoserine intermediate) is an active-site residue. Positions 102, 241, 243, and 245 each coordinate Mg(2+). Ser102 carries the phosphoserine modification.

It belongs to the phosphohexose mutase family. Mg(2+) is required as a cofactor. Post-translationally, activated by phosphorylation.

It catalyses the reaction alpha-D-glucosamine 1-phosphate = D-glucosamine 6-phosphate. Functionally, catalyzes the conversion of glucosamine-6-phosphate to glucosamine-1-phosphate. In Albidiferax ferrireducens (strain ATCC BAA-621 / DSM 15236 / T118) (Rhodoferax ferrireducens), this protein is Phosphoglucosamine mutase.